A 282-amino-acid polypeptide reads, in one-letter code: Nucleotide-binding protein PXO_02223 (282 aa).

5-12 (GLSGSGKS) contributes to the ATP binding site. 57–60 (DVRS) contributes to the GTP binding site.

It belongs to the RapZ-like family.

In terms of biological role, displays ATPase and GTPase activities. This is Nucleotide-binding protein PXO_02223 from Xanthomonas oryzae pv. oryzae (strain PXO99A).